A 389-amino-acid chain; its full sequence is Lipid-A-disaccharide synthase (389 aa).

Belongs to the LpxB family.

The enzyme catalyses a lipid X + a UDP-2-N,3-O-bis[(3R)-3-hydroxyacyl]-alpha-D-glucosamine = a lipid A disaccharide + UDP + H(+). It participates in bacterial outer membrane biogenesis; LPS lipid A biosynthesis. Its function is as follows. Condensation of UDP-2,3-diacylglucosamine and 2,3-diacylglucosamine-1-phosphate to form lipid A disaccharide, a precursor of lipid A, a phosphorylated glycolipid that anchors the lipopolysaccharide to the outer membrane of the cell. This is Lipid-A-disaccharide synthase from Burkholderia orbicola (strain MC0-3).